We begin with the raw amino-acid sequence, 205 residues long: Small ribosomal subunit protein mS26 (205 aa).

The transit peptide at 1–26 directs the protein to the mitochondrion; that stretch reads MLRALSTLGARPLGRPPAQFLLLARG.

Belongs to the mitochondrion-specific ribosomal protein mS26 family. In terms of assembly, component of the mitochondrial ribosome small subunit (28S) which comprises a 12S rRNA and about 30 distinct proteins.

It localises to the mitochondrion. The sequence is that of Small ribosomal subunit protein mS26 (MRPS26) from Bos taurus (Bovine).